The sequence spans 208 residues: Platelet-activating factor receptor (208 aa).

Topologically, residues Met-1–Thr-16 are extracellular. The helical transmembrane segment at Leu-17 to Trp-38 threads the bilayer. Over Val-39 to Ile-54 the chain is Cytoplasmic. Residues Phe-55–Ile-74 traverse the membrane as a helical segment. Residues Val-75 to Asn-91 lie on the Extracellular side of the membrane. Cys-90 and Cys-173 are oxidised to a cystine. A helical transmembrane segment spans residues Leu-92–Tyr-113. Residues Asn-114–Arg-133 lie on the Cytoplasmic side of the membrane. Residues Gly-134–Leu-155 traverse the membrane as a helical segment. Residues Asp-156–Val-184 lie on the Extracellular side of the membrane. Asn-169 is a glycosylation site (N-linked (GlcNAc...) asparagine). A helical membrane pass occupies residues Leu-185–Cys-205. The Cytoplasmic portion of the chain corresponds to Asn-206 to Val-208.

Belongs to the G-protein coupled receptor 1 family. As to quaternary structure, interacts with ARRB1.

Its subcellular location is the cell membrane. Functionally, receptor for platelet activating factor, a chemotactic phospholipid mediator that possesses potent inflammatory, smooth-muscle contractile and hypotensive activity. Seems to mediate its action via a G protein that activates a phosphatidylinositol-calcium second messenger system. This is Platelet-activating factor receptor (PTAFR) from Macaca mulatta (Rhesus macaque).